Reading from the N-terminus, the 235-residue chain is Post-translational flagellin modification protein B (235 aa).

Belongs to the CMP-NeuNAc synthase family.

In terms of biological role, required for biosynthesis of LAH modification in the post-translational modification of Campylobacter coli flagellin. The sequence is that of Post-translational flagellin modification protein B (ptmB) from Campylobacter coli.